The chain runs to 186 residues: Ribosome-recycling factor (186 aa).

This sequence belongs to the RRF family.

Its subcellular location is the cytoplasm. Responsible for the release of ribosomes from messenger RNA at the termination of protein biosynthesis. May increase the efficiency of translation by recycling ribosomes from one round of translation to another. The sequence is that of Ribosome-recycling factor from Phocaeicola vulgatus (strain ATCC 8482 / DSM 1447 / JCM 5826 / CCUG 4940 / NBRC 14291 / NCTC 11154) (Bacteroides vulgatus).